We begin with the raw amino-acid sequence, 456 residues long: Tyrosine phenol-lyase (456 aa).

N6-(pyridoxal phosphate)lysine is present on lysine 257.

Belongs to the beta-eliminating lyase family. Homotetramer. The cofactor is pyridoxal 5'-phosphate. In terms of processing, contains L-DOPA (3',4'-dihydroxyphenylalanine).

The protein localises to the cytoplasm. It catalyses the reaction L-tyrosine + H2O = phenol + pyruvate + NH4(+). This is Tyrosine phenol-lyase (tpl) from Enterobacter agglomerans (Erwinia herbicola).